The chain runs to 309 residues: Sporulation sigma-E factor-processing peptidase (309 aa).

The next 5 membrane-spanning stretches (helical) occupy residues 7 to 27 (VIWL…AFIL), 36 to 55 (LVGG…TPFS), 61 to 78 (PAGK…TFGF), 88 to 105 (LFSF…IIGA), and 130 to 147 (PISW…WFFS). Asp183 is an active-site residue.

This sequence belongs to the peptidase U4 family. As to quaternary structure, self-associates. Interacts with SigE. Interacts with SpoIIR.

The protein localises to the cell membrane. Probable aspartic protease that is responsible for the proteolytic cleavage of the RNA polymerase sigma E factor (SigE/spoIIGB) to yield the active peptide in the mother cell during sporulation. Responds to a signal from the forespore that is triggered by the extracellular signal protein SpoIIR. In Bacillus subtilis (strain 168), this protein is Sporulation sigma-E factor-processing peptidase (spoIIGA).